The primary structure comprises 506 residues: Probable alpha-L-arabinofuranosidase B (506 aa).

An N-terminal signal peptide occupies residues 1–26; that stretch reads MSSGLSLERACAVALGIVASASLVAA. Residues 27 to 343 form a catalytic region; the sequence is GPCDIYSSGG…ADIVAAKYAI (317 aa). Intrachain disulfides connect C29–C39, C89–C94, and C184–C185. N-linked (GlcNAc...) asparagine glycosylation is present at N91. D227 is a substrate binding site. E229 (nucleophile) is an active-site residue. Substrate contacts are provided by N230 and G304. D305 (proton donor) is an active-site residue. An ABD region spans residues 344 to 506; that stretch reads ASLTSGPALT…VSWVVSTGFA (163 aa). C409 and C447 are joined by a disulfide. 8 residues coordinate substrate: H424, N426, F427, D443, H471, E473, L476, and D496.

The protein belongs to the glycosyl hydrolase 54 family.

The protein resides in the secreted. It catalyses the reaction Hydrolysis of terminal non-reducing alpha-L-arabinofuranoside residues in alpha-L-arabinosides.. The protein operates within glycan metabolism; L-arabinan degradation. In terms of biological role, alpha-L-arabinofuranosidase involved in the degradation of arabinoxylan, a major component of plant hemicellulose. Able to hydrolyze 1,5-, 1,3- and 1,2-alpha-linkages not only in L-arabinofuranosyl oligosaccharides, but also in polysaccharides containing terminal non-reducing L-arabinofuranoses in side chains, like L-arabinan, arabinogalactan and arabinoxylan. In Aspergillus flavus (strain ATCC 200026 / FGSC A1120 / IAM 13836 / NRRL 3357 / JCM 12722 / SRRC 167), this protein is Probable alpha-L-arabinofuranosidase B (abfB).